Consider the following 321-residue polypeptide: Probable 1-aminocyclopropane-1-carboxylate oxidase (321 aa).

A Fe2OG dioxygenase domain is found at 159–259 (PTFGTKVSNY…RMSIASFYNP (101 aa)). 3 residues coordinate Fe cation: His183, Asp185, and His240.

This sequence belongs to the iron/ascorbate-dependent oxidoreductase family. It depends on Fe cation as a cofactor.

The enzyme catalyses 1-aminocyclopropane-1-carboxylate + L-ascorbate + O2 = ethene + L-dehydroascorbate + hydrogen cyanide + CO2 + 2 H2O. It participates in alkene biosynthesis; ethylene biosynthesis via S-adenosyl-L-methionine; ethylene from S-adenosyl-L-methionine: step 2/2. The polypeptide is Probable 1-aminocyclopropane-1-carboxylate oxidase (ACO) (Dianthus caryophyllus (Carnation)).